Here is a 304-residue protein sequence, read N- to C-terminus: YEYPQYYLVNPAAYAALGAYMFLLILVGFPINFLTLYVTIEHKKLRTPLNYILLNLAVANLFMVFGGFTTTMFTSIRGYFVLGHLGCNLEGFFATLSGEIALWSLVVLAIERWVVVCKPISNFRFGENHAIMGLAFTWTMAMACAAPPLVGWSRYIPEGMQCSCGIDYYTRAEGFNNESFVVYMFTCHFMTPLTIVFFCYGRLLCAVKEAAAAQQESETTQRAEREVTRMVVIMVIAFLICWCPYAGVAWFIFTHQGSEFGPVFMTIPAFFAKSSSIYNPMIYICLNKQFRHCMITTLCCGKKA.

The Extracellular portion of the chain corresponds to 1–13 (YEYPQYYLVNPAA). Residues 14 to 38 (YAALGAYMFLLILVGFPINFLTLYV) traverse the membrane as a helical segment. At 39–50 (TIEHKKLRTPLN) the chain is on the cytoplasmic side. A helical membrane pass occupies residues 51–73 (YILLNLAVANLFMVFGGFTTTMF). Residues 74-87 (TSIRGYFVLGHLGC) lie on the Extracellular side of the membrane. A disulfide bridge connects residues Cys87 and Cys164. A helical transmembrane segment spans residues 88-110 (NLEGFFATLSGEIALWSLVVLAI). A 'Ionic lock' involved in activated form stabilization motif is present at residues 111-113 (ERW). Residues 111–129 (ERWVVVCKPISNFRFGENH) are Cytoplasmic-facing. Residues 130 to 150 (AIMGLAFTWTMAMACAAPPLV) form a helical membrane-spanning segment. Over 151-179 (GWSRYIPEGMQCSCGIDYYTRAEGFNNES) the chain is Extracellular. N-linked (GlcNAc...) asparagine glycosylation occurs at Asn177. A helical transmembrane segment spans residues 180 to 201 (FVVYMFTCHFMTPLTIVFFCYG). Residues 202–229 (RLLCAVKEAAAAQQESETTQRAEREVTR) lie on the Cytoplasmic side of the membrane. A helical transmembrane segment spans residues 230–251 (MVVIMVIAFLICWCPYAGVAWF). Over 252-263 (IFTHQGSEFGPV) the chain is Extracellular. The helical transmembrane segment at 264–285 (FMTIPAFFAKSSSIYNPMIYIC) threads the bilayer. Lys273 carries the post-translational modification N6-(retinylidene)lysine. Residues 286–304 (LNKQFRHCMITTLCCGKKA) lie on the Cytoplasmic side of the membrane. 2 S-palmitoyl cysteine lipidation sites follow: Cys299 and Cys300.

It belongs to the G-protein coupled receptor 1 family. Opsin subfamily. In terms of processing, phosphorylated on some or all of the serine and threonine residues present in the C-terminal region. Contains one covalently linked retinal chromophore.

Its subcellular location is the membrane. It localises to the cell projection. The protein resides in the cilium. The protein localises to the photoreceptor outer segment. Photoreceptor required for image-forming vision at low light intensity. While most salt water fish species use retinal as chromophore, most freshwater fish use 3-dehydroretinal, or a mixture of retinal and 3-dehydroretinal. Light-induced isomerization of 11-cis to all-trans retinal triggers a conformational change that activates signaling via G-proteins. Subsequent receptor phosphorylation mediates displacement of the bound G-protein alpha subunit by arrestin and terminates signaling. In Ictalurus punctatus (Channel catfish), this protein is Rhodopsin (rho).